Consider the following 165-residue polypeptide: MAETDAAAAQQPPQIQMRVLGQFIRDMSFENVMAQRGASGDVQPDVNVQVNLDAKKRSTDNQYEIAIKLNITSKAKGMDDVLFVFEIDYCGIFHVEGVPNEQLHPFLLIECPRMLFPFLRRIVSDITRDGGYPPLNLDNIDFMALYRSELARQQAAAQAEQKADA.

The protein belongs to the SecB family. Homotetramer, a dimer of dimers. One homotetramer interacts with 1 SecA dimer.

The protein resides in the cytoplasm. One of the proteins required for the normal export of preproteins out of the cell cytoplasm. It is a molecular chaperone that binds to a subset of precursor proteins, maintaining them in a translocation-competent state. It also specifically binds to its receptor SecA. The protein is Protein-export protein SecB of Ruegeria pomeroyi (strain ATCC 700808 / DSM 15171 / DSS-3) (Silicibacter pomeroyi).